A 130-amino-acid polypeptide reads, in one-letter code: Organic solute transporter subunit beta (130 aa).

Residues 1 to 35 (MNYSEKLTGAPPMTEVPLELLEEMLWFFRVEDATP) are Extracellular-facing. A helical membrane pass occupies residues 36–56 (WNCSMFVLAALVAIISFILLG). The Cytoplasmic segment spans residues 57-130 (RNIQANRNQK…HLPDPQEPES (74 aa)). The disordered stretch occupies residues 99–130 (LSEKPTLAQGEMEAKCSDVPRVHLPDPQEPES). Basic and acidic residues predominate over residues 110 to 124 (MEAKCSDVPRVHLPD).

It belongs to the OST-beta family. As to quaternary structure, interacts with SLC51A. The Ost-alpha/Ost-beta complex is a heterodimer composed of alpha (SLC51A) and beta (SLC51B) subunit; induces the transport of SLC51A from the endoplasmic reticulum to the plasma membrane.

Its subcellular location is the cell membrane. It catalyses the reaction taurocholate(out) = taurocholate(in). The catalysed reaction is estrone 3-sulfate(out) = estrone 3-sulfate(in). It carries out the reaction dehydroepiandrosterone 3-sulfate(out) = dehydroepiandrosterone 3-sulfate(in). The enzyme catalyses tauroursodeoxycholate(out) = tauroursodeoxycholate(in). It catalyses the reaction glycoursodeoxycholate(out) = glycoursodeoxycholate(in). The catalysed reaction is glycocholate(out) = glycocholate(in). It carries out the reaction taurochenodeoxycholate(out) = taurochenodeoxycholate(in). The enzyme catalyses glycochenodeoxycholate(out) = glycochenodeoxycholate(in). It catalyses the reaction taurodeoxycholate(out) = taurodeoxycholate(in). The catalysed reaction is glycodeoxycholate(out) = glycodeoxycholate(in). It carries out the reaction prostaglandin E2(out) = prostaglandin E2(in). Functionally, essential component of the Ost-alpha/Ost-beta complex, a heterodimer that acts as the intestinal basolateral transporter responsible for bile acid export from enterocytes into portal blood. The Ost-alpha/Ost-beta complex efficiently transports the major species of bile acids (taurocholate). Taurine conjugates are transported more efficiently across the basolateral membrane than glycine-conjugated bile acids. Can also transport steroids such as estrone 3-sulfate and dehydroepiandrosterone 3-sulfate, therefore playing a role in the enterohepatic circulation of sterols. Able to transport eicosanoids such as prostaglandin E2. Modulates SLC51A glycosylation, membrane trafficking and stability activities. This Bos taurus (Bovine) protein is Organic solute transporter subunit beta (SLC51B).